A 1096-amino-acid chain; its full sequence is DNA-directed RNA polymerase subunit beta (1096 aa).

Residues 1069–1096 (DLMQDVNPRRSTPSRPTYESLGSDYQED) are disordered.

Belongs to the RNA polymerase beta chain family. In terms of assembly, in cyanobacteria the RNAP catalytic core is composed of 2 alpha, 1 beta, 1 beta', 1 gamma and 1 omega subunit. When a sigma factor is associated with the core the holoenzyme is formed, which can initiate transcription.

It catalyses the reaction RNA(n) + a ribonucleoside 5'-triphosphate = RNA(n+1) + diphosphate. In terms of biological role, DNA-dependent RNA polymerase catalyzes the transcription of DNA into RNA using the four ribonucleoside triphosphates as substrates. This is DNA-directed RNA polymerase subunit beta from Prochlorococcus marinus (strain SARG / CCMP1375 / SS120).